Reading from the N-terminus, the 372-residue chain is Serine proteinase inhibitor 1 (372 aa).

The protein belongs to the serpin family. Poxviruses subfamily.

It is found in the host cytoplasm. Plays a role in mediating viral host range. May act to inhibit a caspase independent form of apoptosis to allow efficient virus replication in infected cells. This chain is Serine proteinase inhibitor 1 (OPG208), found in Homo sapiens (Human).